The primary structure comprises 162 residues: MEYIAVAEVLNTHGIKGCLKMRPLTDNIERFDEDICYYLGDKKVKVTIQNYRMYKGFLYIDFEEFNDINEVLGFKKQYLYIDEKDRYELKDGSFYIDDLIGLKAYFNGEYIGDLVDVISIYSNDVYVIKNDEKEFMIPAVKEFIKKIDLENGLIDVVIIEGM.

One can recognise a PRC barrel domain in the interval 91–162 (DGSFYIDDLI…LIDVVIIEGM (72 aa)).

This sequence belongs to the RimM family. In terms of assembly, binds ribosomal protein uS19.

The protein resides in the cytoplasm. An accessory protein needed during the final step in the assembly of 30S ribosomal subunit, possibly for assembly of the head region. Essential for efficient processing of 16S rRNA. May be needed both before and after RbfA during the maturation of 16S rRNA. It has affinity for free ribosomal 30S subunits but not for 70S ribosomes. The protein is Ribosome maturation factor RimM of Finegoldia magna (strain ATCC 29328 / DSM 20472 / WAL 2508) (Peptostreptococcus magnus).